A 303-amino-acid chain; its full sequence is tRNA (guanine-N(7)-)-methyltransferase (303 aa).

The interval 1–64 (MPKPHQVQVI…STSDKISLPR (64 aa)) is disordered. The segment covering 10 to 38 (IKDRETQLREQQEAESKRRTYRDVKEETR) has biased composition (basic and acidic residues). Residues Gly-118, 141 to 142 (EI), 177 to 178 (NA), and Cys-197 contribute to the S-adenosyl-L-methionine site. The active site involves Asp-200. An S-adenosyl-L-methionine-binding site is contributed by 275–277 (TEE).

Belongs to the class I-like SAM-binding methyltransferase superfamily. TrmB family. In terms of assembly, forms a complex with TRM82.

It localises to the nucleus. It carries out the reaction guanosine(46) in tRNA + S-adenosyl-L-methionine = N(7)-methylguanosine(46) in tRNA + S-adenosyl-L-homocysteine. It functions in the pathway tRNA modification; N(7)-methylguanine-tRNA biosynthesis. Catalyzes the formation of N(7)-methylguanine at position 46 (m7G46) in tRNA. The sequence is that of tRNA (guanine-N(7)-)-methyltransferase from Scheffersomyces stipitis (strain ATCC 58785 / CBS 6054 / NBRC 10063 / NRRL Y-11545) (Yeast).